Here is a 501-residue protein sequence, read N- to C-terminus: ATP synthase subunit alpha (501 aa).

Residue 169-176 (GDRQTGKT) coordinates ATP.

Belongs to the ATPase alpha/beta chains family. In terms of assembly, F-type ATPases have 2 components, CF(1) - the catalytic core - and CF(0) - the membrane proton channel. CF(1) has five subunits: alpha(3), beta(3), gamma(1), delta(1), epsilon(1). CF(0) has three main subunits: a(1), b(2) and c(9-12). The alpha and beta chains form an alternating ring which encloses part of the gamma chain. CF(1) is attached to CF(0) by a central stalk formed by the gamma and epsilon chains, while a peripheral stalk is formed by the delta and b chains.

The protein resides in the cell membrane. The catalysed reaction is ATP + H2O + 4 H(+)(in) = ADP + phosphate + 5 H(+)(out). Produces ATP from ADP in the presence of a proton gradient across the membrane. The alpha chain is a regulatory subunit. This is ATP synthase subunit alpha from Desulforamulus reducens (strain ATCC BAA-1160 / DSM 100696 / MI-1) (Desulfotomaculum reducens).